A 461-amino-acid polypeptide reads, in one-letter code: Fibrinogen C domain-containing protein 1 (461 aa).

The segment at 1 to 24 is disordered; sequence MVNDRWKTMGGAAQLEDRPRDKPQ. The Cytoplasmic segment spans residues 1–33; it reads MVNDRWKTMGGAAQLEDRPRDKPQRPSCGYVLC. Positions 15 to 24 are enriched in basic and acidic residues; it reads LEDRPRDKPQ. Residues 34–54 traverse the membrane as a helical; Signal-anchor for type II membrane protein segment; the sequence is TVLLALAVLLAVAVTGAVLFL. Residues 55-461 lie on the Extracellular side of the membrane; it reads NHAHAPGTAP…MKIRPVREDR (407 aa). Residues 214–238 form a disordered region; the sequence is GRPRNKADLQRAPARGTRPRGCATG. Positions 235–458 constitute a Fibrinogen C-terminal domain; it reads CATGSRPRDC…FSEMKIRPVR (224 aa). Residues Cys244 and Cys273 are joined by a disulfide bond. Asn340 carries an N-linked (GlcNAc...) asparagine glycan. Ca(2+)-binding residues include Asp393 and Asp395. A disulfide bond links Cys401 and Cys414.

As to quaternary structure, homotetramer; disulfide-linked. Expressed in the small and large intestinal epithelial cells with a highly polarized localization to the apical surface corresponding to the brush border and in the ducts of the salivary gland.

It localises to the membrane. Its function is as follows. Acetyl group-binding receptor which shows a high-affinity and calcium-dependent binding to acetylated structures such as chitin, some N-acetylated carbohydrates, and amino acids, but not to their non-acetylated counterparts. Can facilitate the endocytosis of acetylated components. This chain is Fibrinogen C domain-containing protein 1 (FIBCD1), found in Homo sapiens (Human).